Here is a 126-residue protein sequence, read N- to C-terminus: Fluoride-specific ion channel FluC (126 aa).

The next 4 membrane-spanning stretches (helical) occupy residues 6-26, 36-56, 68-88, and 99-119; these read FVAV…FAVL, YGTL…VGFF, LLAV…SSEV, and IGML…MLGL. Positions 76 and 79 each coordinate Na(+).

Belongs to the fluoride channel Fluc/FEX (TC 1.A.43) family.

It localises to the cell inner membrane. It carries out the reaction fluoride(in) = fluoride(out). Na(+) is not transported, but it plays an essential structural role and its presence is essential for fluoride channel function. Functionally, fluoride-specific ion channel. Important for reducing fluoride concentration in the cell, thus reducing its toxicity. This Ralstonia nicotianae (strain ATCC BAA-1114 / GMI1000) (Ralstonia solanacearum) protein is Fluoride-specific ion channel FluC.